We begin with the raw amino-acid sequence, 522 residues long: Circadian clock oscillator protein KaiC (522 aa).

2 consecutive KaiC domains span residues M1–F248 and A262–L522. Residues G50, T51, G52, K53, T54, S90, K225, L226, R227, T229, H231, T241, D242, T291, G292, T293, G294, K295, T296, and L297 each contribute to the ATP site. T54 contacts Mg(2+). Residue T296 coordinates Mg(2+). E319 contributes to the Mg(2+) binding site. ATP is bound at residue W332. Residue S432 is modified to Phosphoserine; by autocatalysis. T433 carries the post-translational modification Phosphothreonine; by autocatalysis. Residues R452, K458, M459, R460, S462, H464, and K466 each contribute to the ATP site.

Belongs to the KaiC family. In terms of assembly, homohexamer; hexamerization is dependent on ATP-binding. The KaiABC complex composition changes during the circadian cycle to control KaiC phosphorylation. Complexes KaiC(6), KaiA(2-4):KaiC(6), KaiB(6):KaiC(6) and KaiC(6):KaiB(6):KaiA(12) are among the most important forms, many form cooperatively. KaiC interacts with SasA, activating its autokinase function and leading to RpaA activation. The cofactor is Mg(2+). Post-translationally, phosphorylated on serine and threonine residues by autocatalysis. Has a 4 step phosphorylation cycle; the autokinase acts first on Thr-433, then Ser-432. When Ser-432 is modified KaiC switches to an autophosphatase mode, acting first on phospho-Thr-433 then phospho-Ser-432.

The enzyme catalyses L-seryl-[protein] + ATP = O-phospho-L-seryl-[protein] + ADP + H(+). The catalysed reaction is L-threonyl-[protein] + ATP = O-phospho-L-threonyl-[protein] + ADP + H(+). It catalyses the reaction ATP + H2O = ADP + phosphate + H(+). With respect to regulation, the interaction with KaiA enhances its phosphorylation status, while the interaction with KaiB decreases it. Central component of the KaiABC oscillator complex, which constitutes the main circadian regulator in cyanobacteria. Complex composition changes during the circadian cycle to control KaiC phosphorylation. KaiA stimulates KaiC autophosphorylation, while KaiB sequesters KaiA, leading to KaiC autodephosphorylation. Clock output pathways impact the RpaA transcriptional regulator. KaiC enhances the autophosphorylation activity of SasA, which then transfers its phosphate group to RpaA to activate it. KaiB and KaiC together enhance the phospho-RpaA dephosphatase activity of CikA. Its function is as follows. Has a weak, temperature-independent ATPase activity; ATPase activity defines the circadian period. The phosphorylation state of KaiC modulates its ATPase activity and effects KaiB binding. The sequence is that of Circadian clock oscillator protein KaiC from Acaryochloris marina (strain MBIC 11017).